The primary structure comprises 239 residues: 1-(5-phosphoribosyl)-5-[(5-phosphoribosylamino)methylideneamino] imidazole-4-carboxamide isomerase (239 aa).

The Proton acceptor role is filled by Asp8. Residue Asp129 is the Proton donor of the active site.

Belongs to the HisA/HisF family.

The protein localises to the cytoplasm. The enzyme catalyses 1-(5-phospho-beta-D-ribosyl)-5-[(5-phospho-beta-D-ribosylamino)methylideneamino]imidazole-4-carboxamide = 5-[(5-phospho-1-deoxy-D-ribulos-1-ylimino)methylamino]-1-(5-phospho-beta-D-ribosyl)imidazole-4-carboxamide. It functions in the pathway amino-acid biosynthesis; L-histidine biosynthesis; L-histidine from 5-phospho-alpha-D-ribose 1-diphosphate: step 4/9. The protein is 1-(5-phosphoribosyl)-5-[(5-phosphoribosylamino)methylideneamino] imidazole-4-carboxamide isomerase of Bacillus mycoides (strain KBAB4) (Bacillus weihenstephanensis).